Consider the following 152-residue polypeptide: Sulfur-rich protein (152 aa).

Residues 1–11 (MSTTPIVSGVT) show a composition bias toward polar residues. Residues 1–21 (MSTTPIVSGVTSQNNSSENVS) form a disordered region. Low complexity predominate over residues 12-21 (SQNNSSENVS). The next 2 helical transmembrane spans lie at 44-64 (VGLAVVGIFLVILSIVLLFIL) and 73-93 (IYLAIPAILGCVNICIGILSM).

The protein localises to the membrane. The chain is Sulfur-rich protein (srp) from Chlamydia muridarum (strain MoPn / Nigg).